Consider the following 152-residue polypeptide: Deoxyuridine 5'-triphosphate nucleotidohydrolase (152 aa).

Residues Arg-71–Gly-73, Asn-84, Leu-88–Asp-90, and Met-98 each bind substrate.

It belongs to the dUTPase family. Mg(2+) is required as a cofactor.

The catalysed reaction is dUTP + H2O = dUMP + diphosphate + H(+). It participates in pyrimidine metabolism; dUMP biosynthesis; dUMP from dCTP (dUTP route): step 2/2. In terms of biological role, this enzyme is involved in nucleotide metabolism: it produces dUMP, the immediate precursor of thymidine nucleotides and it decreases the intracellular concentration of dUTP so that uracil cannot be incorporated into DNA. This is Deoxyuridine 5'-triphosphate nucleotidohydrolase from Photorhabdus laumondii subsp. laumondii (strain DSM 15139 / CIP 105565 / TT01) (Photorhabdus luminescens subsp. laumondii).